Here is a 393-residue protein sequence, read N- to C-terminus: Formate-dependent phosphoribosylglycinamide formyltransferase (393 aa).

Residues 22–23 (EL) and E82 each bind N(1)-(5-phospho-beta-D-ribosyl)glycinamide. Residues R114, K155, 160-165 (SSGKGQ), 195-198 (EGFI), and E203 each bind ATP. One can recognise an ATP-grasp domain in the interval 119 to 308 (RLAAEELGLP…EFALHARAIL (190 aa)). Mg(2+) contacts are provided by E267 and E279. N(1)-(5-phospho-beta-D-ribosyl)glycinamide contacts are provided by residues D286, K356, and 363–364 (RR).

The protein belongs to the PurK/PurT family. In terms of assembly, homodimer.

The catalysed reaction is N(1)-(5-phospho-beta-D-ribosyl)glycinamide + formate + ATP = N(2)-formyl-N(1)-(5-phospho-beta-D-ribosyl)glycinamide + ADP + phosphate + H(+). It participates in purine metabolism; IMP biosynthesis via de novo pathway; N(2)-formyl-N(1)-(5-phospho-D-ribosyl)glycinamide from N(1)-(5-phospho-D-ribosyl)glycinamide (formate route): step 1/1. Functionally, involved in the de novo purine biosynthesis. Catalyzes the transfer of formate to 5-phospho-ribosyl-glycinamide (GAR), producing 5-phospho-ribosyl-N-formylglycinamide (FGAR). Formate is provided by PurU via hydrolysis of 10-formyl-tetrahydrofolate. This is Formate-dependent phosphoribosylglycinamide formyltransferase from Azoarcus sp. (strain BH72).